A 328-amino-acid chain; its full sequence is DNA-directed RNA polymerase subunit alpha (328 aa).

Residues 1 to 232 (MSTQGFLKPR…DQISVFAALE (232 aa)) are alpha N-terminal domain (alpha-NTD). Positions 248-328 (IDPVLLRPVD…NWPPLGLERP (81 aa)) are alpha C-terminal domain (alpha-CTD).

It belongs to the RNA polymerase alpha chain family. Homodimer. The RNAP catalytic core consists of 2 alpha, 1 beta, 1 beta' and 1 omega subunit. When a sigma factor is associated with the core the holoenzyme is formed, which can initiate transcription.

The enzyme catalyses RNA(n) + a ribonucleoside 5'-triphosphate = RNA(n+1) + diphosphate. DNA-dependent RNA polymerase catalyzes the transcription of DNA into RNA using the four ribonucleoside triphosphates as substrates. The polypeptide is DNA-directed RNA polymerase subunit alpha (Bordetella bronchiseptica (strain ATCC BAA-588 / NCTC 13252 / RB50) (Alcaligenes bronchisepticus)).